Consider the following 618-residue polypeptide: UvrABC system protein C (618 aa).

A GIY-YIG domain is found at 19 to 97; sequence SEPGIYRMLD…IKALRPKYNV (79 aa). A UVR domain is found at 208–243; it reads QIILDELAERMKNAVSQLNFEEAAVLRDQIKNLRLI.

This sequence belongs to the UvrC family. In terms of assembly, interacts with UvrB in an incision complex.

It localises to the cytoplasm. Functionally, the UvrABC repair system catalyzes the recognition and processing of DNA lesions. UvrC both incises the 5' and 3' sides of the lesion. The N-terminal half is responsible for the 3' incision and the C-terminal half is responsible for the 5' incision. The chain is UvrABC system protein C from Legionella pneumophila (strain Lens).